The primary structure comprises 123 residues: Small ribosomal subunit protein uS13 (123 aa).

It belongs to the universal ribosomal protein uS13 family. In terms of assembly, part of the 30S ribosomal subunit. Forms a loose heterodimer with protein S19. Forms two bridges to the 50S subunit in the 70S ribosome.

Located at the top of the head of the 30S subunit, it contacts several helices of the 16S rRNA. In the 70S ribosome it contacts the 23S rRNA (bridge B1a) and protein L5 of the 50S subunit (bridge B1b), connecting the 2 subunits; these bridges are implicated in subunit movement. Contacts the tRNAs in the A and P-sites. The polypeptide is Small ribosomal subunit protein uS13 (Neorickettsia sennetsu (strain ATCC VR-367 / Miyayama) (Ehrlichia sennetsu)).